The chain runs to 204 residues: Ribonuclease HII (204 aa).

Residues 13 to 204 (GPVAGCDEAG…VRRAARLHSS (192 aa)) form the RNase H type-2 domain. The a divalent metal cation site is built by D19, E20, and D113.

Belongs to the RNase HII family. The cofactor is Mn(2+). Mg(2+) is required as a cofactor.

It localises to the cytoplasm. The enzyme catalyses Endonucleolytic cleavage to 5'-phosphomonoester.. Its function is as follows. Endonuclease that specifically degrades the RNA of RNA-DNA hybrids. The sequence is that of Ribonuclease HII from Cutibacterium acnes (strain DSM 16379 / KPA171202) (Propionibacterium acnes).